The chain runs to 532 residues: Fatty-acid amide hydrolase 2-A (532 aa).

The chain crosses the membrane as a helical span at residues 9–29; the sequence is FLGRLLRAVVWILFAAFKLFA. Residues Lys129 and Ser204 each act as charge relay system in the active site. The Acyl-ester intermediate role is filled by Ser228.

Belongs to the amidase family.

The protein resides in the membrane. The catalysed reaction is N-(5Z,8Z,11Z,14Z-eicosatetraenoyl)-ethanolamine + H2O = ethanolamine + (5Z,8Z,11Z,14Z)-eicosatetraenoate. The enzyme catalyses (9Z)-octadecenamide + H2O = (9Z)-octadecenoate + NH4(+). This is Fatty-acid amide hydrolase 2-A (faah2a) from Danio rerio (Zebrafish).